Reading from the N-terminus, the 1521-residue chain is Probable DNA topoisomerase 2 (1521 aa).

A compositionally biased stretch (acidic residues) spans 1-10 (MSDSENDYSD). The interval 1–87 (MSDSENDYSD…DDKSSSSDNE (87 aa)) is disordered. Residues 36–48 (SKKKASATRKPAA) are compositionally biased toward basic residues. Residues 49 to 62 (KKATTTTTSTTKKS) show a composition bias toward low complexity. Residues Asn-163, Asn-192, 220–222 (SSH), and 233–240 (GRNGFGAK) contribute to the ATP site. Positions 412–414 (NKK) are interaction with DNA. Position 446-448 (446-448 (QTK)) interacts with ATP. In terms of domain architecture, Toprim spans 527-640 (CTLILTEGDS…TLLRMPGFLV (114 aa)). Glu-533, Asp-609, and Asp-611 together coordinate Mg(2+). The Topo IIA-type catalytic domain occupies 771 to 1273 (IPNIVDGLKT…PIQEIYKRDL (503 aa)). Tyr-861 (O-(5'-phospho-DNA)-tyrosine intermediate) is an active-site residue. Residues 1007 to 1047 (GTRKKKKEEKEKKAASRKGTKAKPTTTKRSKRVDDDDDNEK) form a disordered region. The span at 1021–1037 (ASRKGTKAKPTTTKRSK) shows a compositional bias: basic residues. Residues 1085 to 1094 (KLVSTINETN) are interaction with DNA. Disordered stretches follow at residues 1192-1222 (KIKK…EQDD) and 1335-1521 (IPTT…SDSD). Positions 1201–1222 (DEEDAAISSDEEKDGAQEEQDD) are enriched in acidic residues. A compositionally biased stretch (low complexity) spans 1354–1368 (TTSTSTSTTTSSNTK). A compositionally biased stretch (acidic residues) spans 1422–1438 (LSDESDQESDQESDQGS). A compositionally biased stretch (low complexity) spans 1454-1467 (PTTIATKKATTSKS). The span at 1468–1480 (KVIDDKSSDDEVI) shows a compositional bias: basic and acidic residues. Over residues 1503 to 1521 (SDSDDDDLYDNEESSSDSD) the composition is skewed to acidic residues.

The protein belongs to the type II topoisomerase family. As to quaternary structure, homodimer. The cofactor is Mg(2+). Requires Mn(2+) as cofactor. Ca(2+) is required as a cofactor.

The protein localises to the nucleus. It catalyses the reaction ATP-dependent breakage, passage and rejoining of double-stranded DNA.. Functionally, control of topological states of DNA by transient breakage and subsequent rejoining of DNA strands. Topoisomerase II makes double-strand breaks. This chain is Probable DNA topoisomerase 2 (top2), found in Dictyostelium discoideum (Social amoeba).